The following is a 272-amino-acid chain: Indole-3-glycerol phosphate synthase (272 aa).

The protein belongs to the TrpC family.

It carries out the reaction 1-(2-carboxyphenylamino)-1-deoxy-D-ribulose 5-phosphate + H(+) = (1S,2R)-1-C-(indol-3-yl)glycerol 3-phosphate + CO2 + H2O. Its pathway is amino-acid biosynthesis; L-tryptophan biosynthesis; L-tryptophan from chorismate: step 4/5. In Mycobacterium tuberculosis (strain CDC 1551 / Oshkosh), this protein is Indole-3-glycerol phosphate synthase (trpC).